The sequence spans 238 residues: tRNA (guanine-N(7)-)-methyltransferase (238 aa).

Residues Glu68, Glu93, Asp120, and Asp143 each contribute to the S-adenosyl-L-methionine site. The active site involves Asp143. Substrate is bound by residues Lys147, Asp179, and 216–219 (TKFE).

It belongs to the class I-like SAM-binding methyltransferase superfamily. TrmB family.

The enzyme catalyses guanosine(46) in tRNA + S-adenosyl-L-methionine = N(7)-methylguanosine(46) in tRNA + S-adenosyl-L-homocysteine. It functions in the pathway tRNA modification; N(7)-methylguanine-tRNA biosynthesis. Catalyzes the formation of N(7)-methylguanine at position 46 (m7G46) in tRNA. This is tRNA (guanine-N(7)-)-methyltransferase from Shewanella baltica (strain OS155 / ATCC BAA-1091).